Here is a 388-residue protein sequence, read N- to C-terminus: Succinate--CoA ligase [ADP-forming] subunit beta (388 aa).

The ATP-grasp domain occupies 9–244; sequence KKLFAEYGLP…PSQDDPREAH (236 aa). Residues Lys46, 53–55, Glu99, Thr102, and Glu107 contribute to the ATP site; that span reads GRG. Mg(2+)-binding residues include Asn199 and Asp213. Substrate contacts are provided by residues Asn264 and 321 to 323; that span reads GIV.

It belongs to the succinate/malate CoA ligase beta subunit family. As to quaternary structure, heterotetramer of two alpha and two beta subunits. It depends on Mg(2+) as a cofactor.

It catalyses the reaction succinate + ATP + CoA = succinyl-CoA + ADP + phosphate. It carries out the reaction GTP + succinate + CoA = succinyl-CoA + GDP + phosphate. It functions in the pathway carbohydrate metabolism; tricarboxylic acid cycle; succinate from succinyl-CoA (ligase route): step 1/1. Its function is as follows. Succinyl-CoA synthetase functions in the citric acid cycle (TCA), coupling the hydrolysis of succinyl-CoA to the synthesis of either ATP or GTP and thus represents the only step of substrate-level phosphorylation in the TCA. The beta subunit provides nucleotide specificity of the enzyme and binds the substrate succinate, while the binding sites for coenzyme A and phosphate are found in the alpha subunit. In Aeromonas salmonicida (strain A449), this protein is Succinate--CoA ligase [ADP-forming] subunit beta.